The primary structure comprises 283 residues: Pantothenate synthetase (283 aa).

30 to 37 (MGNLHDGH) lines the ATP pocket. H37 functions as the Proton donor in the catalytic mechanism. Q61 is a binding site for (R)-pantoate. Residue Q61 coordinates beta-alanine. 149-152 (GEKD) is an ATP binding site. (R)-pantoate is bound at residue Q155. 186 to 189 (LSSR) is a binding site for ATP.

This sequence belongs to the pantothenate synthetase family. Homodimer.

Its subcellular location is the cytoplasm. The catalysed reaction is (R)-pantoate + beta-alanine + ATP = (R)-pantothenate + AMP + diphosphate + H(+). It functions in the pathway cofactor biosynthesis; (R)-pantothenate biosynthesis; (R)-pantothenate from (R)-pantoate and beta-alanine: step 1/1. Catalyzes the condensation of pantoate with beta-alanine in an ATP-dependent reaction via a pantoyl-adenylate intermediate. The sequence is that of Pantothenate synthetase from Escherichia coli O127:H6 (strain E2348/69 / EPEC).